Consider the following 338-residue polypeptide: Thiamine thiazole synthase (338 aa).

Positions 1–43 (MSPVATESMYKPTTINQTAHQQAMDPLKSKQQSNATVNKPAFK) are disordered. Positions 11–21 (KPTTINQTAHQ) are enriched in polar residues. Residues alanine 91, 112-113 (ES), glycine 120, and cysteine 185 each bind substrate. Cysteine 221 bears the 2,3-didehydroalanine (Cys) mark. Substrate-binding positions include aspartate 223, histidine 238, methionine 290, and 300 to 302 (RMG).

This sequence belongs to the THI4 family. As to quaternary structure, homooctamer. Fe cation serves as cofactor. During the catalytic reaction, a sulfide is transferred from Cys-221 to a reaction intermediate, generating a dehydroalanine residue. In terms of tissue distribution, highly expressed in haustoria, and only in low amounts in intercellular hyphae. Found in the basal hyphae of the uredia, but not in the pedicels and only at very low levels in uredospores.

Its subcellular location is the cytoplasm. It localises to the nucleus. It catalyses the reaction [ADP-thiazole synthase]-L-cysteine + glycine + NAD(+) = [ADP-thiazole synthase]-dehydroalanine + ADP-5-ethyl-4-methylthiazole-2-carboxylate + nicotinamide + 3 H2O + 2 H(+). In terms of biological role, involved in biosynthesis of the thiamine precursor thiazole. Catalyzes the conversion of NAD and glycine to adenosine diphosphate 5-(2-hydroxyethyl)-4-methylthiazole-2-carboxylic acid (ADT), an adenylated thiazole intermediate. The reaction includes an iron-dependent sulfide transfer from a conserved cysteine residue of the protein to a thiazole intermediate. The enzyme can only undergo a single turnover, which suggests it is a suicide enzyme. May have additional roles in adaptation to various stress conditions and in DNA damage tolerance. The chain is Thiamine thiazole synthase (THI2) from Uromyces fabae (Rust fungus).